Consider the following 303-residue polypeptide: Bidirectional sugar transporter SWEET14 (303 aa).

Residues 1-9 (MAGMSLQHP) are Extracellular-facing. The chain crosses the membrane as a helical span at residues 10–30 (WAFAFGLLGNIISFMTYLAPL). The region spanning 13–98 (AFGLLGNIIS…AVYLVYAPKK (86 aa)) is the MtN3/slv 1 domain. Residues 31 to 44 (PTFYRIYKSKSTQG) lie on the Cytoplasmic side of the membrane. A helical transmembrane segment spans residues 45 to 65 (FQSVPYVVALFSAMLWIYYAL). The Extracellular portion of the chain corresponds to 66–72 (LKSDECL). A helical membrane pass occupies residues 73 to 93 (LITINSAGCVIETIYIAVYLV). At 94–105 (YAPKKAKMFTAK) the chain is on the cytoplasmic side. Residues 106–126 (LLLLVNVGVFGLILLLTLLLS) traverse the membrane as a helical segment. Residues 127 to 133 (AGDRRIV) are Extracellular-facing. Residues 134 to 154 (VLGWVCVGFSVSVFVAPLSII) traverse the membrane as a helical segment. The MtN3/slv 2 domain occupies 134–217 (VLGWVCVGFS…MGLYAMYRNS (84 aa)). Residues 155 to 167 (RLVVRTKSVEFMP) are Cytoplasmic-facing. Residues 168 to 188 (FSLSFSLTISAVVWFLYGLLI) traverse the membrane as a helical segment. Over 189 to 192 (KDKY) the chain is Extracellular. The helical transmembrane segment at 193-213 (VALPNVLGFSFGVIQMGLYAM) threads the bilayer. At 214 to 303 (YRNSTPKAVL…AGAGEKKVAA (90 aa)) the chain is on the cytoplasmic side. The interval 266-290 (HPVDVESPPAEAPPQEDDKAAAATA) is disordered.

It belongs to the SWEET sugar transporter family. In terms of assembly, forms homooligomers and/or heterooligomers.

It localises to the cell membrane. In terms of biological role, mediates both low-affinity uptake and efflux of sugar across the plasma membrane. The protein is Bidirectional sugar transporter SWEET14 (SWEET14) of Oryza sativa subsp. indica (Rice).